The following is a 140-amino-acid chain: Cystatin-like 1 (140 aa).

The N-terminal stretch at 1 to 23 is a signal peptide; it reads MEMKARGLRIPLLLLLVTVVVMA. The Cystatin domain occupies 32 to 126; that stretch reads GGFKEKAMSK…CKSLIYSVPW (95 aa). N-linked (GlcNAc...) asparagine glycosylation occurs at Asn45. Intrachain disulfides connect Cys94–Cys104 and Cys117–Cys137.

Belongs to the cystatin family. In terms of tissue distribution, highly expressed in testis where it localizes to spermatogonium, spermatocyes and round spermatids. Not detected in spermatozoa. Also detected in epididymis, cerebrum and pituitary.

The protein localises to the secreted. This Mus musculus (Mouse) protein is Cystatin-like 1.